The sequence spans 1073 residues: Probable lipase MIL1 (1073 aa).

Disordered stretches follow at residues 1–151 (MSDS…AVSS) and 163–190 (LTSK…KSVN). Composition is skewed to basic and acidic residues over residues 54–81 (QAKE…EAGK) and 101–121 (GIDR…HDTD). The APM2-interacting WQEMP motif motif lies at 143 to 147 (WQEMP). Asparagine 190, asparagine 229, and asparagine 236 each carry an N-linked (GlcNAc...) asparagine glycan. The interval 230-267 (SSQTSVNLTSSPSTTSLNNEKNNDDDDDDSYDEYEDDV) is disordered. Positions 233 to 249 (TSVNLTSSPSTTSLNNE) are enriched in low complexity. Acidic residues predominate over residues 252–267 (NDDDDDDSYDEYEDDV). Asparagine 280 is a glycosylation site (N-linked (GlcNAc...) asparagine). A helical membrane pass occupies residues 292-312 (FAYVGAINILANQMCTNLATL). A disordered region spans residues 385-448 (NPWENDRDHE…SDVPGKVLDP (64 aa)). Over residues 404-427 (RMSPNEQNGSVQASTPDPEQSATP) the composition is skewed to polar residues. N-linked (GlcNAc...) asparagine glycosylation is present at asparagine 411. A Phosphoserine modification is found at serine 435. A helical membrane pass occupies residues 457–477 (LNIDVAWTIICDLFLICLQSS). Asparagine 495 carries N-linked (GlcNAc...) asparagine glycosylation. 2 consecutive transmembrane segments (helical) span residues 553-573 (LVLG…IAAG) and 577-597 (IGIT…VVAV). Asparagine 726 is a glycosylation site (N-linked (GlcNAc...) asparagine). Residues 818 to 838 (WFLAYLFRAAAGGFSAVMGIS) form a helical membrane-spanning segment. Asparagine 850 carries N-linked (GlcNAc...) asparagine glycosylation. 2 disordered regions span residues 942–968 (GRDM…EGIA) and 1010–1073 (KEVE…PDDI). A compositionally biased stretch (pro residues) spans 1027–1037 (PSTPKINPPQS). Serine 1037 carries the post-translational modification Phosphoserine.

It belongs to the TMCO4 family. As to quaternary structure, interacts with RPP0. Interacts with APM2.

It localises to the golgi apparatus membrane. The protein resides in the early endosome membrane. Its subcellular location is the cytoplasmic vesicle. The protein localises to the clathrin-coated vesicle membrane. Probable lipase that recruits the AP-1-related (AP-1R) complex to membranes via interaction with APM2. The AP-1R complex is an adapter protein complex that mediates of cargo protein SNC1 sorting in clathrin-coated vesicles. The chain is Probable lipase MIL1 from Saccharomyces cerevisiae (strain ATCC 204508 / S288c) (Baker's yeast).